The chain runs to 147 residues: UPF0306 protein KPK_0562 (147 aa).

The protein belongs to the UPF0306 family.

The sequence is that of UPF0306 protein KPK_0562 from Klebsiella pneumoniae (strain 342).